A 727-amino-acid polypeptide reads, in one-letter code: YTH domain-containing protein 1 (727 aa).

Residues 1 to 12 (MAADSREEKDGE) are compositionally biased toward basic and acidic residues. The segment at 1 to 338 (MAADSREEKD…KHEKLSSSVR (338 aa)) is disordered. Position 35 is a phosphoserine (serine 35). The span at 50–59 (DRMESTDTKR) shows a compositional bias: basic and acidic residues. Positions 63-90 (SVHSRQLVSKPLSSSVSNNKRIVSTKGK) are enriched in polar residues. The span at 91 to 115 (SATEYKNEEYQRSERNKRLDADRKI) shows a compositional bias: basic and acidic residues. Residue lysine 96 forms a Glycyl lysine isopeptide (Lys-Gly) (interchain with G-Cter in SUMO2) linkage. A phosphoserine mark is found at serine 118 and serine 120. The segment covering 124–144 (EPYKNQPEKTCVRKRDPERRA) has biased composition (basic and acidic residues). Serine 146 bears the Phosphoserine mark. Threonine 148 carries the phosphothreonine modification. 2 stretches are compositionally biased toward basic and acidic residues: residues 151–163 (GSERIGLEVDRRA) and 170–185 (SKEEVNSEEYGSDHET). Acidic residues predominate over residues 199 to 254 (ENEEEGVEEDVEEDEEVEEDAEEDEEVDEDGEEEEEEEEEEEEEEEEEEEEYEQDE). The segment covering 255 to 270 (RDQKEEGNDYDTRSEA) has biased composition (basic and acidic residues). Residues 280-289 (FTDGSVRSGS) show a composition bias toward polar residues. Residues serine 308, serine 315, serine 317, serine 318, and serine 320 each carry the phosphoserine modification. Over residues 315-325 (SGSSASESYAG) the composition is skewed to low complexity. The region spanning 355–492 (ARFFLIKSNN…ECGTQLCLLF (138 aa)) is the YTH domain. RNA is bound by residues 361–363 (KSN) and 377–378 (WS). Serine 424 carries the post-translational modification Phosphoserine. Tryptophan 428 serves as a coordination point for RNA. Serine 435 carries the phosphoserine modification. Aspartate 476 lines the RNA pocket. Residues 508–523 (RHKRRMHSQPRSRGRP) show a composition bias toward basic residues. Disordered regions lie at residues 508–564 (RHKR…PGYL), 607–643 (GMPPYPGMEQPPHHPYYQHHAPPPQAHPPYSGHHPVP), and 669–727 (AVVS…RYRR). Positions 524–564 (SRREPVRDVGRRRPEDYDIHNSRKKPRIDYPPEFHQRPGYL) are enriched in basic and acidic residues. Position 545 is a phosphoserine (serine 545). Residues 679–727 (RERDRERERDRPRDNRRDRERDRGRDRERERERLCDRDRDRGERGRYRR) are compositionally biased toward basic and acidic residues.

In terms of assembly, interacts with SRSF1. Interacts with SRSF2. Interacts with SRSF3. Interacts with SRSF7. Interacts with SRSF10. Interacts with CPSF6. Interacts with KHDRBS1/SAM68. Interacts with TRA2B. Interacts with KHDRBS3. Interacts with EMD. Interacts with RBMX. Interacts with ZCCHC8. In terms of processing, tyrosine phosphorylated.

The protein resides in the nucleus. It is found in the nucleus speckle. Regulator of alternative splicing that specifically recognizes and binds N6-methyladenosine (m6A)-containing RNAs. M6A is a modification present at internal sites of mRNAs and some non-coding RNAs and plays a role in the efficiency of mRNA splicing, processing and stability. Acts as a key regulator of exon-inclusion or exon-skipping during alternative splicing via interaction with mRNA splicing factors SRSF3 and SRSF10. Specifically binds m6A-containing mRNAs and promotes recruitment of SRSF3 to its mRNA-binding elements adjacent to m6A sites, leading to exon-inclusion during alternative splicing. In contrast, interaction with SRSF3 prevents interaction with SRSF10, a splicing factor that promotes exon skipping: this prevents SRSF10 from binding to its mRNA-binding sites close to m6A-containing regions, leading to inhibit exon skipping during alternative splicing. May also regulate alternative splice site selection. Also involved in nuclear export of m6A-containing mRNAs via interaction with SRSF3: interaction with SRSF3 facilitates m6A-containing mRNA-binding to both SRSF3 and NXF1, promoting mRNA nuclear export. Involved in S-adenosyl-L-methionine homeostasis by regulating expression of MAT2A transcripts, probably by binding m6A-containing MAT2A mRNAs. Also recognizes and binds m6A on other RNA molecules. Involved in random X inactivation mediated by Xist RNA: recognizes and binds m6A-containing Xist and promotes transcription repression activity of Xist. Also recognizes and binds m6A-containing single-stranded DNA. Involved in germline development: required for spermatogonial development in males and oocyte growth and maturation in females, probably via its role in alternative splicing. This chain is YTH domain-containing protein 1, found in Homo sapiens (Human).